The chain runs to 580 residues: Protein O-linked-mannose beta-1,4-N-acetylglucosaminyltransferase 2 (580 aa).

At M1–S4 the chain is on the cytoplasmic side. The chain crosses the membrane as a helical; Signal-anchor for type II membrane protein span at residues A5–L25. Residues R26–T580 lie on the Lumenal side of the membrane. N99 and N276 each carry an N-linked (GlcNAc...) asparagine glycan. One can recognise a Fibronectin type-III domain in the interval A488–T580.

This sequence belongs to the glycosyltransferase 61 family.

It is found in the endoplasmic reticulum membrane. It catalyses the reaction 3-O-(alpha-D-mannosyl)-L-threonyl-[protein] + UDP-N-acetyl-alpha-D-glucosamine = 3-O-(N-acetyl-beta-D-glucosaminyl-(1-&gt;4)-alpha-D-mannosyl)-L-threonyl-[protein] + UDP + H(+). It participates in protein modification; protein glycosylation. O-linked mannose beta-1,4-N-acetylglucosaminyltransferase that transfers UDP-N-acetyl-D-glucosamine to the 4-position of the mannose to generate N-acetyl-D-glucosamine-beta-1,4-O-D-mannosylprotein. Involved in the biosynthesis of the phosphorylated O-mannosyl trisaccharide (N-acetylgalactosamine-beta-3-N-acetylglucosamine-beta-4-(phosphate-6-)mannose), a carbohydrate structure present in alpha-dystroglycan (DAG1), which is required for binding laminin G-like domain-containing extracellular proteins with high affinity. The chain is Protein O-linked-mannose beta-1,4-N-acetylglucosaminyltransferase 2 (POMGNT2) from Pan troglodytes (Chimpanzee).